The sequence spans 251 residues: Triosephosphate isomerase (251 aa).

Residue Asn9–Lys11 coordinates substrate. His95 (electrophile) is an active-site residue. Residue Glu167 is the Proton acceptor of the active site. Substrate contacts are provided by residues Gly173, Ser213, and Gly234–Gly235. A Phosphoserine modification is found at Ser213.

It belongs to the triosephosphate isomerase family. Homodimer.

It localises to the cytoplasm. It carries out the reaction D-glyceraldehyde 3-phosphate = dihydroxyacetone phosphate. The protein operates within carbohydrate biosynthesis; gluconeogenesis. It participates in carbohydrate degradation; glycolysis; D-glyceraldehyde 3-phosphate from glycerone phosphate: step 1/1. Its function is as follows. Involved in the gluconeogenesis. Catalyzes stereospecifically the conversion of dihydroxyacetone phosphate (DHAP) to D-glyceraldehyde-3-phosphate (G3P). In Bacillus cereus (strain G9842), this protein is Triosephosphate isomerase.